The primary structure comprises 448 residues: Probable glycine dehydrogenase (decarboxylating) subunit 1 (448 aa).

This sequence belongs to the GcvP family. N-terminal subunit subfamily. In terms of assembly, the glycine cleavage system is composed of four proteins: P, T, L and H. In this organism, the P 'protein' is a heterodimer of two subunits.

It carries out the reaction N(6)-[(R)-lipoyl]-L-lysyl-[glycine-cleavage complex H protein] + glycine + H(+) = N(6)-[(R)-S(8)-aminomethyldihydrolipoyl]-L-lysyl-[glycine-cleavage complex H protein] + CO2. The glycine cleavage system catalyzes the degradation of glycine. The P protein binds the alpha-amino group of glycine through its pyridoxal phosphate cofactor; CO(2) is released and the remaining methylamine moiety is then transferred to the lipoamide cofactor of the H protein. This Listeria monocytogenes serovar 1/2a (strain ATCC BAA-679 / EGD-e) protein is Probable glycine dehydrogenase (decarboxylating) subunit 1.